A 506-amino-acid chain; its full sequence is Glycerol kinase (506 aa).

T11 contributes to the ADP binding site. Residues T11, S12, and S13 each contribute to the ATP site. T11 provides a ligand contact to sn-glycerol 3-phosphate. ADP is bound at residue R15. The sn-glycerol 3-phosphate site is built by R81, E82, Y133, and D242. R81, E82, Y133, D242, and Q243 together coordinate glycerol. Residues T264 and G316 each contribute to the ADP site. ATP-binding residues include T264, G316, Q320, and G421. 2 residues coordinate ADP: G421 and N425.

This sequence belongs to the FGGY kinase family.

The catalysed reaction is glycerol + ATP = sn-glycerol 3-phosphate + ADP + H(+). It participates in polyol metabolism; glycerol degradation via glycerol kinase pathway; sn-glycerol 3-phosphate from glycerol: step 1/1. Its activity is regulated as follows. Inhibited by fructose 1,6-bisphosphate (FBP). Key enzyme in the regulation of glycerol uptake and metabolism. Catalyzes the phosphorylation of glycerol to yield sn-glycerol 3-phosphate. The polypeptide is Glycerol kinase (Paracidovorax citrulli (strain AAC00-1) (Acidovorax citrulli)).